A 352-amino-acid chain; its full sequence is Protein NDRG4 (352 aa).

Residues Ser-298, Ser-317, and Ser-323 each carry the phosphoserine modification. Positions 301 to 352 are disordered; the sequence is AVPSASMTRLARSRTASLTSASSVDGSRPQPCTHSDSSEGMGQVNHTMEVSC. The span at 308–323 shows a compositional bias: low complexity; it reads TRLARSRTASLTSASS. A compositionally biased stretch (polar residues) spans 330–352; sequence QPCTHSDSSEGMGQVNHTMEVSC.

It belongs to the NDRG family. Expressed in the brain and heart, weakly in the kidney; most prominently in postnatal brain where it is expressed widely in the olfactory bulb, cerebral cortex, hippocampus, cerebellum, thalamus, and medulla oblongata.

It is found in the cytoplasm. It localises to the cytosol. Contributes to the maintenance of intracerebral BDNF levels within the normal range, which is necessary for the preservation of spatial learning and the resistance to neuronal cell death caused by ischemic stress. May enhance growth factor-induced ERK1 and ERK2 phosphorylation, including that induced by NGF. May attenuate NGF-promoted ELK1 phosphorylation in a microtubule-dependent manner. The sequence is that of Protein NDRG4 (Ndrg4) from Rattus norvegicus (Rat).